Here is a 122-residue protein sequence, read N- to C-terminus: Large ribosomal subunit protein uL14 (122 aa).

This sequence belongs to the universal ribosomal protein uL14 family. As to quaternary structure, part of the 50S ribosomal subunit. Forms a cluster with proteins L3 and L19. In the 70S ribosome, L14 and L19 interact and together make contacts with the 16S rRNA in bridges B5 and B8.

Its function is as follows. Binds to 23S rRNA. Forms part of two intersubunit bridges in the 70S ribosome. The sequence is that of Large ribosomal subunit protein uL14 from Mycobacterium leprae (strain TN).